We begin with the raw amino-acid sequence, 128 residues long: UPF0102 protein RPB_0420 (128 aa).

This sequence belongs to the UPF0102 family.

This is UPF0102 protein RPB_0420 from Rhodopseudomonas palustris (strain HaA2).